A 193-amino-acid chain; its full sequence is Molybdenum cofactor guanylyltransferase (193 aa).

GTP-binding positions include 8 to 10, K21, D67, and D98; that span reads LAG. Mg(2+) is bound at residue D98.

This sequence belongs to the MobA family. As to quaternary structure, monomer. The cofactor is Mg(2+).

It is found in the cytoplasm. It carries out the reaction Mo-molybdopterin + GTP + H(+) = Mo-molybdopterin guanine dinucleotide + diphosphate. Functionally, transfers a GMP moiety from GTP to Mo-molybdopterin (Mo-MPT) cofactor (Moco or molybdenum cofactor) to form Mo-molybdopterin guanine dinucleotide (Mo-MGD) cofactor. This Cereibacter sphaeroides (strain ATCC 17023 / DSM 158 / JCM 6121 / CCUG 31486 / LMG 2827 / NBRC 12203 / NCIMB 8253 / ATH 2.4.1.) (Rhodobacter sphaeroides) protein is Molybdenum cofactor guanylyltransferase.